The primary structure comprises 1009 residues: Mediator of RNA polymerase II transcription subunit 5 (1009 aa).

The protein belongs to the Mediator complex subunit 5 family. In terms of assembly, component of the Mediator complex.

The protein resides in the nucleus. In terms of biological role, component of the Mediator complex, a coactivator involved in the regulated transcription of nearly all RNA polymerase II-dependent genes. Mediator functions as a bridge to convey information from gene-specific regulatory proteins to the basal RNA polymerase II transcription machinery. Mediator is recruited to promoters by direct interactions with regulatory proteins and serves as a scaffold for the assembly of a functional preinitiation complex with RNA polymerase II and the general transcription factors. This is Mediator of RNA polymerase II transcription subunit 5 (nut1) from Neosartorya fischeri (strain ATCC 1020 / DSM 3700 / CBS 544.65 / FGSC A1164 / JCM 1740 / NRRL 181 / WB 181) (Aspergillus fischerianus).